The primary structure comprises 280 residues: Phosphatidylglycerol--prolipoprotein diacylglyceryl transferase (280 aa).

Transmembrane regions (helical) follow at residues 15–35, 60–80, and 90–110; these read IFSI…IFAL, FIGL…PVFF, and IWEG…VLLF. Arg-138 provides a ligand contact to a 1,2-diacyl-sn-glycero-3-phospho-(1'-sn-glycerol). 2 helical membrane-spanning segments follow: residues 217–237 and 257–277; these read MPFG…RIFL and GQLL…NIYV.

It belongs to the Lgt family.

It localises to the cell membrane. The enzyme catalyses L-cysteinyl-[prolipoprotein] + a 1,2-diacyl-sn-glycero-3-phospho-(1'-sn-glycerol) = an S-1,2-diacyl-sn-glyceryl-L-cysteinyl-[prolipoprotein] + sn-glycerol 1-phosphate + H(+). Its pathway is protein modification; lipoprotein biosynthesis (diacylglyceryl transfer). Its function is as follows. Catalyzes the transfer of the diacylglyceryl group from phosphatidylglycerol to the sulfhydryl group of the N-terminal cysteine of a prolipoprotein, the first step in the formation of mature lipoproteins. This chain is Phosphatidylglycerol--prolipoprotein diacylglyceryl transferase, found in Buchnera aphidicola subsp. Baizongia pistaciae (strain Bp).